Here is a 349-residue protein sequence, read N- to C-terminus: Protein MULTIPLE CHLOROPLAST DIVISION SITE 1 (349 aa).

The transit peptide at 1-52 (MASIDSLQFHSLCNLQSSIGRAKLQNPSSLVIFRRRPVNLNWVQFETKGSFV) directs the protein to the chloroplast. The Chloroplast intermembrane portion of the chain corresponds to 53–116 (CKAIGDSSTP…VVFLMKKCSV (64 aa)). A helical transmembrane segment spans residues 117-139 (NSIWIGVCITATVLVAAIRAYVV). The Stromal portion of the chain corresponds to 140–349 (RKSRDNQRAG…NSSSEETHKS (210 aa)). The segment at 315–349 (QRPYKFSAKLEGENIQKNSQENHTGNSSSEETHKS) is disordered. Positions 329–343 (IQKNSQENHTGNSSS) are enriched in polar residues.

In terms of assembly, interacts with MIND1. Interacts with ARC6 in the chloroplast stroma and binds to FtsZ2-1 in an ARC6-dependent manner.

Its subcellular location is the plastid. The protein localises to the chloroplast inner membrane. Functionally, required for chloroplast division. Together with MIND1 and ARC3, regulates FtsZ ring positioning in chloroplasts in an ARC6-dependent manner. Determines the site of chloroplast division in concert with MIND1. Not directly involved in ring formation, but required for MIND1 and MINE1 localization to regulate FtsZ ring formation during plastidial constriction. This is Protein MULTIPLE CHLOROPLAST DIVISION SITE 1 from Arabidopsis thaliana (Mouse-ear cress).